The sequence spans 514 residues: MAGPEPPMPLSRGGPGSASLSPPRGDRTLLVRHLPAELTAEEKEDLLKYFGAQSVRVLSDKGRLKHTAFATFPNEKAAIKALTRLHQLKLLGHTLVVEFAKEQDRVHSPCSTSNTEKKKRLDDTVENDKEKKEPDILTVENGIAPNHGLTFPLNSCLKYMYPPPSSTILANIVNALASVPKFYVQVLHLMNKMNLPTPFGPITARPPMYEDYMPLHAPLPPTSPQPPEEPPLPDEDEDLSSKESEYESSDEEDRQRMNRLMELANLQPKRPKTEKPRHVRKKRKIKDMLNIPSSASHSLHPVLLPSDVFDQPQSVGNKKIEFNISTNMPAAFNKDLETQPNNEEENSDSPDTGLDSNTGFGKIFPKPNLNITEEITEDSDEIPSQFISRKELEKGRISREEMETLSVFRSYEPGEPNCRIYVKNLARHVQEKDLKFIFGRYVDFSSETQRIMFDIRLMKEGRMKGQAFVGLPNEKAAAKALKEANGYVLFGKPMVVQFARSARPKQDSKEGKRK.

The segment at 1-26 (MAGPEPPMPLSRGGPGSASLSPPRGD) is disordered. Phosphoserine is present on S21. The 76-residue stretch at 27-102 (RTLLVRHLPA…HTLVVEFAKE (76 aa)) folds into the RRM 1 domain. Disordered stretches follow at residues 106–133 (VHSP…EKKE), 213–282 (MPLH…VRKK), and 337–363 (ETQP…FGKI). S108 is subject to Phosphoserine. The segment covering 115 to 133 (TEKKKRLDDTVENDKEKKE) has biased composition (basic and acidic residues). Over residues 217–230 (APLPPTSPQPPEEP) the composition is skewed to pro residues. At S349 the chain carries Phosphoserine. The RRM 2 domain occupies 418–501 (CRIYVKNLAR…KPMVVQFARS (84 aa)).

Component of the U11/U12 snRNPs that are part of the U12-type spliceosome. Found in a complex with m(7)G-capped U12 snRNA. Interacts with PDCD7.

The protein localises to the nucleus. Participates in pre-mRNA U12-dependent splicing, performed by the minor spliceosome which removes U12-type introns. U12-type introns comprises less than 1% of all non-coding sequences. Binds to the 3'-stem-loop of m(7)G-capped U12 snRNA. The protein is RNA-binding region-containing protein 3 (Rnpc3) of Mus musculus (Mouse).